The following is an 812-amino-acid chain: Probable beta-glucosidase D (812 aa).

A signal peptide spans 1 to 18 (MRVPSLSVLSFLLGTALA). 2 N-linked (GlcNAc...) asparagine glycosylation sites follow: Asn53 and Asn188. The interval 186–248 (ETNRTGGMGG…GMGGGMAGSS (63 aa)) is disordered. Residues 191 to 207 (GGMGGGGGAPGGGGMGR) show a composition bias toward gly residues. Residues 211 to 225 (FSSSVPGGMSPTSSA) show a composition bias toward polar residues. Positions 236–245 (GGSGMGGGMA) are enriched in gly residues. N-linked (GlcNAc...) asparagine glycosylation occurs at Asn296. Asp324 is an active-site residue. 6 N-linked (GlcNAc...) asparagine glycosylation sites follow: Asn360, Asn384, Asn422, Asn501, Asn592, and Asn646.

Belongs to the glycosyl hydrolase 3 family.

It is found in the secreted. The enzyme catalyses Hydrolysis of terminal, non-reducing beta-D-glucosyl residues with release of beta-D-glucose.. It functions in the pathway glycan metabolism; cellulose degradation. Its function is as follows. Beta-glucosidases are one of a number of cellulolytic enzymes involved in the degradation of cellulosic biomass. Catalyzes the last step releasing glucose from the inhibitory cellobiose. This Emericella nidulans (strain FGSC A4 / ATCC 38163 / CBS 112.46 / NRRL 194 / M139) (Aspergillus nidulans) protein is Probable beta-glucosidase D (bglD).